Here is a 359-residue protein sequence, read N- to C-terminus: UDP-3-O-acylglucosamine N-acyltransferase (359 aa).

The active-site Proton acceptor is the histidine 253.

Belongs to the transferase hexapeptide repeat family. LpxD subfamily. In terms of assembly, homotrimer.

The enzyme catalyses a UDP-3-O-[(3R)-3-hydroxyacyl]-alpha-D-glucosamine + a (3R)-hydroxyacyl-[ACP] = a UDP-2-N,3-O-bis[(3R)-3-hydroxyacyl]-alpha-D-glucosamine + holo-[ACP] + H(+). It participates in bacterial outer membrane biogenesis; LPS lipid A biosynthesis. Functionally, catalyzes the N-acylation of UDP-3-O-acylglucosamine using 3-hydroxyacyl-ACP as the acyl donor. Is involved in the biosynthesis of lipid A, a phosphorylated glycolipid that anchors the lipopolysaccharide to the outer membrane of the cell. This chain is UDP-3-O-acylglucosamine N-acyltransferase, found in Burkholderia lata (strain ATCC 17760 / DSM 23089 / LMG 22485 / NCIMB 9086 / R18194 / 383).